The chain runs to 151 residues: Large ribosomal subunit protein bL9 (151 aa).

The protein belongs to the bacterial ribosomal protein bL9 family.

Binds to the 23S rRNA. This chain is Large ribosomal subunit protein bL9, found in Prochlorococcus marinus (strain AS9601).